The following is a 783-amino-acid chain: RNA exonuclease 5 (783 aa).

Residues 230-378 form the Exonuclease domain; the sequence is LFGLDCEMCL…EDARTTLELA (149 aa). RRM domains lie at 503–577 and 598–677; these read STVY…RPVT and GTIY…RHLH.

The protein is RNA exonuclease 5 (REXO5) of Bos taurus (Bovine).